Reading from the N-terminus, the 326-residue chain is Heat-inducible transcription repressor HrcA (326 aa).

It belongs to the HrcA family.

In terms of biological role, negative regulator of class I heat shock genes (grpE-dnaK-dnaJ and groELS operons). Prevents heat-shock induction of these operons. In Staphylococcus saprophyticus subsp. saprophyticus (strain ATCC 15305 / DSM 20229 / NCIMB 8711 / NCTC 7292 / S-41), this protein is Heat-inducible transcription repressor HrcA.